The chain runs to 98 residues: NADH-ubiquinone oxidoreductase chain 4L (98 aa).

The next 3 helical transmembrane spans lie at 1-21, 29-49, and 61-81; these read MPYIYTNLFLAFLTSLLGMLI, SLLCLEGMMLSMFIMTSLTIL, and IILLVFAACEAAVGLALLVMV.

Belongs to the complex I subunit 4L family. In terms of assembly, core subunit of respiratory chain NADH dehydrogenase (Complex I) which is composed of 45 different subunits.

The protein resides in the mitochondrion inner membrane. It carries out the reaction a ubiquinone + NADH + 5 H(+)(in) = a ubiquinol + NAD(+) + 4 H(+)(out). In terms of biological role, core subunit of the mitochondrial membrane respiratory chain NADH dehydrogenase (Complex I) which catalyzes electron transfer from NADH through the respiratory chain, using ubiquinone as an electron acceptor. Part of the enzyme membrane arm which is embedded in the lipid bilayer and involved in proton translocation. This chain is NADH-ubiquinone oxidoreductase chain 4L (MT-ND4L), found in Cephalopachus bancanus (Western tarsier).